We begin with the raw amino-acid sequence, 466 residues long: MGKTLYQKLFDAHIVHEAPNETPLLYIDRHLVHEVTSPQAFDGLRAMGRKVRQPGKTFATMDHNVSTQTKDINASGEMARIQMQELIKNCAEFGVQLYDLNHPYQGIVHVIGPEQGMTLPGMTIVCGDSHTATHGAFGSLAFGIGTSEVEHVLATQTLKQGRAKTMKIEVTGDAAHGITAKDIVLAIIGKTGSAGGTGHVVEFCGKAIRALSMEGRMTLCNMAIEMGAKAGLVAPDETTFNYLKGRQFAPKDANWDAAVAYWSTLKSDDDAQFDTIVTLDAAQIAPQVTWGTNPGQVIAVNQEIPNPDSFSDPVERASAAKALAYMDLQPGIKLTDVKIDKVFIGSCTNSRIEDLRAAAEIAKGRKVAAGVQAIVVPGSGPVKTMAELEGLDKVFIEAGFEWRLPGCSMCLAMNNDRLNPGERCASTSNRNFEGRQGRAGRTHLVSPAMAAAAAVTGRFADVRELN.

The [4Fe-4S] cluster site is built by Cys347, Cys407, and Cys410.

It belongs to the aconitase/IPM isomerase family. LeuC type 1 subfamily. Heterodimer of LeuC and LeuD. [4Fe-4S] cluster serves as cofactor.

It carries out the reaction (2R,3S)-3-isopropylmalate = (2S)-2-isopropylmalate. It participates in amino-acid biosynthesis; L-leucine biosynthesis; L-leucine from 3-methyl-2-oxobutanoate: step 2/4. Functionally, catalyzes the isomerization between 2-isopropylmalate and 3-isopropylmalate, via the formation of 2-isopropylmaleate. The polypeptide is 3-isopropylmalate dehydratase large subunit (Pectobacterium atrosepticum (strain SCRI 1043 / ATCC BAA-672) (Erwinia carotovora subsp. atroseptica)).